A 633-amino-acid polypeptide reads, in one-letter code: Acetylcholinesterase (633 aa).

The first 23 residues, 1–23, serve as a signal peptide directing secretion; the sequence is MKILDALLFPVIFIMFFIHLSIA. C91 and C118 are disulfide-bonded. N-linked (GlcNAc...) asparagine glycosylation is found at N133 and N184. S225 (acyl-ester intermediate) is an active-site residue. C279 and C290 form a disulfide bridge. N-linked (GlcNAc...) asparagine glycosylation occurs at N283. E352 (charge relay system) is an active-site residue. N368 is a glycosylation site (N-linked (GlcNAc...) asparagine). C427 and C579 are oxidised to a cystine. H494 functions as the Charge relay system in the catalytic mechanism. Residues N511 and N591 are each glycosylated (N-linked (GlcNAc...) asparagine).

The protein belongs to the type-B carboxylesterase/lipase family.

The protein resides in the synapse. It localises to the secreted. The protein localises to the cell membrane. The enzyme catalyses acetylcholine + H2O = choline + acetate + H(+). In terms of biological role, terminates signal transduction at the neuromuscular junction by rapid hydrolysis of the acetylcholine released into the synaptic cleft. This chain is Acetylcholinesterase (ache), found in Electrophorus electricus (Electric eel).